A 118-amino-acid polypeptide reads, in one-letter code: MARGMKLACVVLVICMVVIAPMAEGAISCGAVTSDLSPCLTYLTGGPGPSPQCCGGVKKLLAAANTTPDRQAACNCLKSAAGSITKLNTNNAAALPGKCGVNIPYKISTTTNCNTVKF.

The signal sequence occupies residues 1–25; it reads MARGMKLACVVLVICMVVIAPMAEG. Disulfide bonds link C29–C76, C39–C53, C54–C99, and C74–C113.

Belongs to the plant LTP family.

Functionally, plant non-specific lipid-transfer proteins transfer phospholipids as well as galactolipids across membranes. May play a role in wax or cutin deposition in the cell walls of expanding epidermal cells and certain secretory tissues. Binds saturated fatty acids, jasmonic acid and, with highest efficiency, unsaturated fatty acids and lysolipids. In Lens culinaris (Lentil), this protein is Non-specific lipid-transfer protein 2.